Reading from the N-terminus, the 203-residue chain is Molybdenum cofactor guanylyltransferase (203 aa).

GTP contacts are provided by residues 20–22, Lys33, Asn61, Asp78, and Asp108; that span reads LAG. Asp108 serves as a coordination point for Mg(2+).

This sequence belongs to the MobA family. In terms of assembly, monomer. Requires Mg(2+) as cofactor.

Its subcellular location is the cytoplasm. It catalyses the reaction Mo-molybdopterin + GTP + H(+) = Mo-molybdopterin guanine dinucleotide + diphosphate. Functionally, transfers a GMP moiety from GTP to Mo-molybdopterin (Mo-MPT) cofactor (Moco or molybdenum cofactor) to form Mo-molybdopterin guanine dinucleotide (Mo-MGD) cofactor. This chain is Molybdenum cofactor guanylyltransferase, found in Vibrio cholerae serotype O1 (strain ATCC 39315 / El Tor Inaba N16961).